The sequence spans 251 residues: Ubiquinone/menaquinone biosynthesis C-methyltransferase UbiE (251 aa).

S-adenosyl-L-methionine is bound by residues Thr-74, Asp-95, 123–124 (NA), and Ser-140.

Belongs to the class I-like SAM-binding methyltransferase superfamily. MenG/UbiE family.

The catalysed reaction is a 2-demethylmenaquinol + S-adenosyl-L-methionine = a menaquinol + S-adenosyl-L-homocysteine + H(+). It catalyses the reaction a 2-methoxy-6-(all-trans-polyprenyl)benzene-1,4-diol + S-adenosyl-L-methionine = a 5-methoxy-2-methyl-3-(all-trans-polyprenyl)benzene-1,4-diol + S-adenosyl-L-homocysteine + H(+). It functions in the pathway quinol/quinone metabolism; menaquinone biosynthesis; menaquinol from 1,4-dihydroxy-2-naphthoate: step 2/2. The protein operates within cofactor biosynthesis; ubiquinone biosynthesis. Its function is as follows. Methyltransferase required for the conversion of demethylmenaquinol (DMKH2) to menaquinol (MKH2) and the conversion of 2-polyprenyl-6-methoxy-1,4-benzoquinol (DDMQH2) to 2-polyprenyl-3-methyl-6-methoxy-1,4-benzoquinol (DMQH2). The polypeptide is Ubiquinone/menaquinone biosynthesis C-methyltransferase UbiE (Enterobacter sp. (strain 638)).